Consider the following 251-residue polypeptide: Osmotin-like protein (251 aa).

Positions 1–21 are cleaved as a signal peptide; the sequence is MSHLTTFLVFFLLAFVTYTYA. Intrachain disulfides connect C31/C226, C73/C83, C88/C94, C142/C214, C147/C197, C155/C165, C169/C178, and C179/C184. An N-linked (GlcNAc...) asparagine glycan is attached at N233.

This sequence belongs to the thaumatin family.

This is Osmotin-like protein (OLPA) from Nicotiana tabacum (Common tobacco).